The chain runs to 232 residues: Octanoyltransferase (232 aa).

A BPL/LPL catalytic domain is found at 43–231 (LPTSNYLLFV…HLTHLFEAEI (189 aa)). Substrate-binding positions include 88–95 (RGGDITYH), 160–162 (AMG), and 173–175 (GFA). The Acyl-thioester intermediate role is filled by C191.

It belongs to the LipB family.

It is found in the cytoplasm. The enzyme catalyses octanoyl-[ACP] + L-lysyl-[protein] = N(6)-octanoyl-L-lysyl-[protein] + holo-[ACP] + H(+). It functions in the pathway protein modification; protein lipoylation via endogenous pathway; protein N(6)-(lipoyl)lysine from octanoyl-[acyl-carrier-protein]: step 1/2. Functionally, catalyzes the transfer of endogenously produced octanoic acid from octanoyl-acyl-carrier-protein onto the lipoyl domains of lipoate-dependent enzymes. Lipoyl-ACP can also act as a substrate although octanoyl-ACP is likely to be the physiological substrate. The chain is Octanoyltransferase from Flavobacterium johnsoniae (strain ATCC 17061 / DSM 2064 / JCM 8514 / BCRC 14874 / CCUG 350202 / NBRC 14942 / NCIMB 11054 / UW101) (Cytophaga johnsonae).